The chain runs to 313 residues: Putative S-adenosyl-L-methionine-dependent methyltransferase MAV_5149 (313 aa).

S-adenosyl-L-methionine contacts are provided by residues Asp135 and Asp164–Leu165.

It belongs to the UPF0677 family.

Functionally, exhibits S-adenosyl-L-methionine-dependent methyltransferase activity. The protein is Putative S-adenosyl-L-methionine-dependent methyltransferase MAV_5149 of Mycobacterium avium (strain 104).